Consider the following 682-residue polypeptide: Potassium-transporting ATPase ATP-binding subunit (682 aa).

A run of 4 helical transmembrane segments spans residues 34-54 (PVMFIVWIGSLLTTCISIAMA), 62-82 (ALFSAAISGWLWVTVLFANFA), 219-239 (IALTILLIALTIVFLLATATL), and 254-274 (VLVALLVCLIPTTIGGLLSAI). Aspartate 307 acts as the 4-aspartylphosphate intermediate in catalysis. ATP contacts are provided by residues aspartate 344, glutamate 348, 377–384 (FTAQSRMS), and lysine 395. Mg(2+)-binding residues include aspartate 518 and aspartate 522. The next 3 helical transmembrane spans lie at 588 to 608 (FAIIPAAFAATYPQLNALNIM), 616 to 636 (AILSAVIFNALIIVFLIPLAL), and 656 to 676 (IYGLGGLLVPFIGIKVIDLLL).

The protein belongs to the cation transport ATPase (P-type) (TC 3.A.3) family. Type IA subfamily. The system is composed of three essential subunits: KdpA, KdpB and KdpC.

It localises to the cell inner membrane. The catalysed reaction is K(+)(out) + ATP + H2O = K(+)(in) + ADP + phosphate + H(+). Its function is as follows. Part of the high-affinity ATP-driven potassium transport (or Kdp) system, which catalyzes the hydrolysis of ATP coupled with the electrogenic transport of potassium into the cytoplasm. This subunit is responsible for energy coupling to the transport system and for the release of the potassium ions to the cytoplasm. This Shigella boydii serotype 4 (strain Sb227) protein is Potassium-transporting ATPase ATP-binding subunit.